The chain runs to 139 residues: Putative nickel-responsive regulator (139 aa).

Ni(2+) is bound by residues His-79, His-90, His-92, and Cys-98.

This sequence belongs to the transcriptional regulatory CopG/NikR family. Ni(2+) serves as cofactor.

In terms of biological role, transcriptional regulator. In Anaeromyxobacter sp. (strain K), this protein is Putative nickel-responsive regulator.